The primary structure comprises 313 residues: D-alanine--D-alanine ligase (313 aa).

The ATP-grasp domain occupies 108 to 308 (KLVWQQTGVP…YSELVVKVLS (201 aa)). ATP is bound at residue 138–193 (VAKLGLPLFVKPASEGSSVAVLKVKTADALPAALSEAATHDKIVIVEKSIEGGGEY). Mg(2+) contacts are provided by Asp262, Glu275, and Asn277.

Belongs to the D-alanine--D-alanine ligase family. It depends on Mg(2+) as a cofactor. Mn(2+) serves as cofactor.

The protein localises to the cytoplasm. The enzyme catalyses 2 D-alanine + ATP = D-alanyl-D-alanine + ADP + phosphate + H(+). It participates in cell wall biogenesis; peptidoglycan biosynthesis. Its function is as follows. Cell wall formation. This is D-alanine--D-alanine ligase from Burkholderia ambifaria (strain MC40-6).